A 321-amino-acid chain; its full sequence is Cytochrome c biogenesis protein CcsA (321 aa).

Helical transmembrane passes span Ile-9 to Leu-29, Gly-44 to Gly-64, Leu-71 to Phe-91, Leu-97 to Leu-117, Met-143 to Ile-163, Val-227 to Asn-247, Thr-261 to His-275, and Ala-288 to Leu-308.

Belongs to the CcmF/CycK/Ccl1/NrfE/CcsA family. As to quaternary structure, may interact with Ccs1.

The protein localises to the plastid. It localises to the chloroplast thylakoid membrane. In terms of biological role, required during biogenesis of c-type cytochromes (cytochrome c6 and cytochrome f) at the step of heme attachment. The protein is Cytochrome c biogenesis protein CcsA of Nandina domestica (Heavenly bamboo).